Reading from the N-terminus, the 290-residue chain is NAD kinase (290 aa).

Residue Asp-75 is the Proton acceptor of the active site. NAD(+)-binding positions include 75–76, 148–149, Asp-178, 189–194, and Gln-247; these read DG, NE, and TAYNIS.

The protein belongs to the NAD kinase family. The cofactor is a divalent metal cation.

Its subcellular location is the cytoplasm. It catalyses the reaction NAD(+) + ATP = ADP + NADP(+) + H(+). Functionally, involved in the regulation of the intracellular balance of NAD and NADP, and is a key enzyme in the biosynthesis of NADP. Catalyzes specifically the phosphorylation on 2'-hydroxyl of the adenosine moiety of NAD to yield NADP. The protein is NAD kinase of Wolinella succinogenes (strain ATCC 29543 / DSM 1740 / CCUG 13145 / JCM 31913 / LMG 7466 / NCTC 11488 / FDC 602W) (Vibrio succinogenes).